The sequence spans 202 residues: Probable ATP-dependent Clp protease proteolytic subunit 3 (202 aa).

The active-site Nucleophile is the serine 101. The active site involves histidine 126.

The protein belongs to the peptidase S14 family. As to quaternary structure, fourteen ClpP subunits assemble into 2 heptameric rings which stack back to back to give a disk-like structure with a central cavity, resembling the structure of eukaryotic proteasomes.

It is found in the cytoplasm. The catalysed reaction is Hydrolysis of proteins to small peptides in the presence of ATP and magnesium. alpha-casein is the usual test substrate. In the absence of ATP, only oligopeptides shorter than five residues are hydrolyzed (such as succinyl-Leu-Tyr-|-NHMec, and Leu-Tyr-Leu-|-Tyr-Trp, in which cleavage of the -Tyr-|-Leu- and -Tyr-|-Trp bonds also occurs).. Functionally, cleaves peptides in various proteins in a process that requires ATP hydrolysis. Has a chymotrypsin-like activity. Plays a major role in the degradation of misfolded proteins. This is Probable ATP-dependent Clp protease proteolytic subunit 3 from Synechocystis sp. (strain ATCC 27184 / PCC 6803 / Kazusa).